A 238-amino-acid polypeptide reads, in one-letter code: Zinc-finger homeodomain protein 11 (238 aa).

A ZF-HD dimerization-type; degenerate zinc finger spans residues 12–59 (YRECMRNHAAKLGTYANDGCCEYTPDDGHPAGLLCAACGCHRNFHRKD). Positions 119–188 (RRRTRTKFTE…NHKAGGGGGG (70 aa)) form a DNA-binding region, homeobox. The span at 183–200 (GGGGGGGGSGGPGAGGGA) shows a compositional bias: gly residues. The segment at 183 to 238 (GGGGGGGGSGGPGAGGGAQTSSSTTRGGGDVGVGLSPAMGGDGEDDEEVRGSEMCM) is disordered.

In terms of assembly, homo- and heterodimer with other ZFHD proteins.

It localises to the nucleus. Functionally, putative transcription factor. The polypeptide is Zinc-finger homeodomain protein 11 (ZHD11) (Oryza sativa subsp. indica (Rice)).